A 117-amino-acid polypeptide reads, in one-letter code: Large ribosomal subunit protein bL17 (117 aa).

This sequence belongs to the bacterial ribosomal protein bL17 family. Part of the 50S ribosomal subunit. Contacts protein L32.

The protein is Large ribosomal subunit protein bL17 of Campylobacter jejuni subsp. jejuni serotype O:6 (strain 81116 / NCTC 11828).